Here is a 360-residue protein sequence, read N- to C-terminus: MDYDRYKLFVGGIAKETSEEALKQYFSRYGAVLEAVVAKEKVTGKPRGFGFVRFANDCDVVKALRDTHFILGKPVDVRKAIRKHELYQQPFSMQFLERKVQQMNGGLREMSSNGVTSRTKKIFVGGLSSNTTEEEFKSYFERFGRTTDVVVMHDGVTNRPRGFGFVTYDSEDSVEVVMQSNFHELSDKRVEVKRAIPKEGIQSNNGNAVNIPPSYSSFQATPYVPEQNGYGMVLQFPPPVFGYHHNVQAVQYPYGYQFTAQVANVSWNNPIMQPTGFYCAPPHPTPPPTNNLGYIQYMNGFDLSGTNISGYNPLAWPVTGDAAGALIHQFVDLKLDVHSQAHQRMNGGNMGIPLQNGTYI.

In terms of domain architecture, RRM 1 spans 6–82; that stretch reads YKLFVGGIAK…KPVDVRKAIR (77 aa). The stretch at 93 to 113 forms a coiled coil; sequence MQFLERKVQQMNGGLREMSSN. One can recognise an RRM 2 domain in the interval 120–197; that stretch reads KKIFVGGLSS…KRVEVKRAIP (78 aa).

As to expression, highly expressed in inflorescences and roots. Detected in leaves and seedlings, but not in stems. Expressed in vegetative shoot apex and root meristem, but not in root cap. Detected in flower buds, junction of pedicels, joints of immature siliques and pistil.

Functionally, RNA binding protein. Can also bind in vitro to single-stranded DNA. The polypeptide is RNA-binding protein 1 (RBP1) (Arabidopsis thaliana (Mouse-ear cress)).